The primary structure comprises 208 residues: Holliday junction branch migration complex subunit RuvA (208 aa).

A domain I region spans residues 1 to 64; the sequence is MIGKLKGIVD…EDMIRLYGFR (64 aa). A domain II region spans residues 65–143; it reads VDAEREWFRL…AFAPIDPALI (79 aa). The segment at 144–152 is flexible linker; sequence ALTGAVEDR. A domain III region spans residues 153 to 208; the sequence is TAPQPVADAISALVNLGYAQIQASAAIAAALKGLGEEAGTVEAKTLIRLGLRELAR.

The protein belongs to the RuvA family. Homotetramer. Forms an RuvA(8)-RuvB(12)-Holliday junction (HJ) complex. HJ DNA is sandwiched between 2 RuvA tetramers; dsDNA enters through RuvA and exits via RuvB. An RuvB hexamer assembles on each DNA strand where it exits the tetramer. Each RuvB hexamer is contacted by two RuvA subunits (via domain III) on 2 adjacent RuvB subunits; this complex drives branch migration. In the full resolvosome a probable DNA-RuvA(4)-RuvB(12)-RuvC(2) complex forms which resolves the HJ.

It localises to the cytoplasm. In terms of biological role, the RuvA-RuvB-RuvC complex processes Holliday junction (HJ) DNA during genetic recombination and DNA repair, while the RuvA-RuvB complex plays an important role in the rescue of blocked DNA replication forks via replication fork reversal (RFR). RuvA specifically binds to HJ cruciform DNA, conferring on it an open structure. The RuvB hexamer acts as an ATP-dependent pump, pulling dsDNA into and through the RuvAB complex. HJ branch migration allows RuvC to scan DNA until it finds its consensus sequence, where it cleaves and resolves the cruciform DNA. The protein is Holliday junction branch migration complex subunit RuvA of Methylorubrum extorquens (strain CM4 / NCIMB 13688) (Methylobacterium extorquens).